The following is a 666-amino-acid chain: Transketolase (666 aa).

Position 26 (His26) interacts with substrate. Thiamine diphosphate is bound by residues His66 and 114–116; that span reads GPL. Asp155 provides a ligand contact to Mg(2+). Positions 156 and 185 each coordinate thiamine diphosphate. Residues Asn185 and Ile187 each coordinate Mg(2+). Substrate is bound by residues His261, Arg358, and Ser385. Residue His261 participates in thiamine diphosphate binding. Catalysis depends on Glu411, which acts as the Proton donor. Position 437 (Phe437) interacts with thiamine diphosphate. Substrate contacts are provided by His461, Asp469, and Arg520.

It belongs to the transketolase family. As to quaternary structure, homodimer. It depends on Mg(2+) as a cofactor. The cofactor is Ca(2+). Mn(2+) is required as a cofactor. Requires Co(2+) as cofactor. Thiamine diphosphate serves as cofactor.

It catalyses the reaction D-sedoheptulose 7-phosphate + D-glyceraldehyde 3-phosphate = aldehydo-D-ribose 5-phosphate + D-xylulose 5-phosphate. Its function is as follows. Catalyzes the transfer of a two-carbon ketol group from a ketose donor to an aldose acceptor, via a covalent intermediate with the cofactor thiamine pyrophosphate. In Buchnera aphidicola subsp. Baizongia pistaciae (strain Bp), this protein is Transketolase (tkt).